Reading from the N-terminus, the 252-residue chain is Lipoprotein PrgK (252 aa).

A signal peptide spans 1–17 (MIRRYLYTFLLVMTLAG). A lipid anchor (N-palmitoyl cysteine) is attached at cysteine 18. Residue cysteine 18 is the site of S-diacylglycerol cysteine attachment. A helical transmembrane segment spans residues 207–227 (FATSWIVLIILLSVMSAGFGV).

The protein belongs to the YscJ lipoprotein family.

The protein localises to the cell outer membrane. Required for invasion of epithelial cells. Could be involved in protein secretion. This Salmonella typhimurium (strain LT2 / SGSC1412 / ATCC 700720) protein is Lipoprotein PrgK (prgK).